A 484-amino-acid polypeptide reads, in one-letter code: Glutamate mutase epsilon subunit (484 aa).

Arginine 66 provides a ligand contact to L-glutamate. Residue glycine 68 coordinates adenosylcob(III)alamin. L-glutamate is bound at residue arginine 100. Position 123 (asparagine 123) interacts with adenosylcob(III)alamin. Residues 149–150 (RH), glutamate 171, and tyrosine 177 contribute to the L-glutamate site. Residue proline 180 participates in adenosylcob(III)alamin binding. Tyrosine 181 serves as a coordination point for L-glutamate. Adenosylcob(III)alamin is bound by residues phenylalanine 297, lysine 326, glutamate 330, and isoleucine 334.

This sequence belongs to the methylaspartate mutase GlmE subunit family. As to quaternary structure, heterotetramer composed of 2 epsilon subunits (GlmE) and 2 sigma subunits (GlmS). GlmE exists as a homodimer and GlmS as a monomer. Adenosylcob(III)alamin serves as cofactor.

It catalyses the reaction (2S,3S)-3-methyl-L-aspartate = L-glutamate. It functions in the pathway amino-acid degradation; L-glutamate degradation via mesaconate pathway; acetate and pyruvate from L-glutamate: step 1/4. Its function is as follows. Catalyzes the carbon skeleton rearrangement of L-glutamate to L-threo-3-methylaspartate ((2S,3S)-3-methylaspartate). The protein is Glutamate mutase epsilon subunit of Desulfitobacterium hafniense (strain Y51).